The primary structure comprises 515 residues: Bifunctional purine biosynthesis protein PurH (515 aa).

The MGS-like domain occupies 1–145; sequence MTKRALISVS…KNHASVTVVV (145 aa).

This sequence belongs to the PurH family.

The enzyme catalyses (6R)-10-formyltetrahydrofolate + 5-amino-1-(5-phospho-beta-D-ribosyl)imidazole-4-carboxamide = 5-formamido-1-(5-phospho-D-ribosyl)imidazole-4-carboxamide + (6S)-5,6,7,8-tetrahydrofolate. It catalyses the reaction IMP + H2O = 5-formamido-1-(5-phospho-D-ribosyl)imidazole-4-carboxamide. The protein operates within purine metabolism; IMP biosynthesis via de novo pathway; 5-formamido-1-(5-phospho-D-ribosyl)imidazole-4-carboxamide from 5-amino-1-(5-phospho-D-ribosyl)imidazole-4-carboxamide (10-formyl THF route): step 1/1. It participates in purine metabolism; IMP biosynthesis via de novo pathway; IMP from 5-formamido-1-(5-phospho-D-ribosyl)imidazole-4-carboxamide: step 1/1. The chain is Bifunctional purine biosynthesis protein PurH from Streptococcus agalactiae serotype III (strain NEM316).